The chain runs to 145 residues: UI (145 aa).

The first 22 residues, 1-22 (MKPVPLVLLITSVLLTTHIPLS), serve as a signal peptide directing secretion. A Valine amide modification is found at Val-143.

It belongs to the sauvagine/corticotropin-releasing factor/urotensin I family.

It is found in the secreted. In terms of biological role, urotensin is found in the teleost caudal neurosecretory system. It has a suggested role in osmoregulation and as a corticotropin-releasing factor. The non-hormonal portion of this precursor may be a urotensin binding protein, urophysin. The sequence is that of UI from Carassius auratus (Goldfish).